The primary structure comprises 427 residues: Glutamate-1-semialdehyde 2,1-aminomutase (427 aa).

Lys-265 carries the N6-(pyridoxal phosphate)lysine modification.

The protein belongs to the class-III pyridoxal-phosphate-dependent aminotransferase family. HemL subfamily. As to quaternary structure, homodimer. Requires pyridoxal 5'-phosphate as cofactor.

It localises to the cytoplasm. It carries out the reaction (S)-4-amino-5-oxopentanoate = 5-aminolevulinate. The protein operates within porphyrin-containing compound metabolism; protoporphyrin-IX biosynthesis; 5-aminolevulinate from L-glutamyl-tRNA(Glu): step 2/2. This chain is Glutamate-1-semialdehyde 2,1-aminomutase, found in Pseudomonas putida (strain GB-1).